We begin with the raw amino-acid sequence, 210 residues long: Nucleoside triphosphate pyrophosphatase (210 aa).

D80 (proton acceptor) is an active-site residue.

Belongs to the Maf family. A divalent metal cation is required as a cofactor.

It localises to the cytoplasm. The catalysed reaction is a ribonucleoside 5'-triphosphate + H2O = a ribonucleoside 5'-phosphate + diphosphate + H(+). The enzyme catalyses a 2'-deoxyribonucleoside 5'-triphosphate + H2O = a 2'-deoxyribonucleoside 5'-phosphate + diphosphate + H(+). In terms of biological role, nucleoside triphosphate pyrophosphatase. May have a dual role in cell division arrest and in preventing the incorporation of modified nucleotides into cellular nucleic acids. The chain is Nucleoside triphosphate pyrophosphatase from Mycobacterium sp. (strain JLS).